The chain runs to 152 residues: Ribosome maturation factor RimP (152 aa).

Belongs to the RimP family.

The protein resides in the cytoplasm. Required for maturation of 30S ribosomal subunits. The polypeptide is Ribosome maturation factor RimP (Pectobacterium atrosepticum (strain SCRI 1043 / ATCC BAA-672) (Erwinia carotovora subsp. atroseptica)).